The primary structure comprises 355 residues: Trans-enoyl reductase (355 aa).

45–48 lines the NADP(+) pocket; that stretch reads VDTK. 131 to 138 contacts substrate; it reads ISFMTTGL. NADP(+) is bound by residues 166-169, 189-192, Tyr-207, and 254-255; these read SSAT, SPRN, and LE. Substrate is bound at residue 275-279; sequence GPQML. Residue 344-345 participates in NADP(+) binding; sequence IS.

This sequence belongs to the zinc-containing alcohol dehydrogenase family. Monomer.

The enzyme catalyses L-serine + 7 malonyl-CoA + acetyl-CoA + 2 S-adenosyl-L-methionine + ATP + 8 NADPH + 11 H(+) = (5S)-3-[(2E,6R,8E,10E,12E)-2,6-dimethyltetradeca-2,8,10,12-tetraenoyl]-5-(hydroxymethyl)pyrrolidine-2,4-dione + AMP + 2 S-adenosyl-L-homocysteine + 7 CO2 + diphosphate + 8 NADP(+) + 8 CoA + 6 H2O. Its pathway is mycotoxin biosynthesis. Functionally, hybrid PKS-NRPS synthetase; part of the gene cluster that mediates the biosynthesis of trichosetin, a trans-fused decalin-containing tetramic acid with antimicrobial activity. The PKS module of PKS-NRPS1 together with the enoylreductase (ER) catalyze the formation of the polyketide unit which is then conjugated to L-serine by the condensation domain of the PKS-NRPS1 NRPS module. Activity of the Dieckmann cyclase domain (RED) results in release of the Dieckmann product intermediate. Diels-Alderase (DA) is involved in endo-selective Diels-Alder cycloaddition to form the decalin ring, leading to the production of N-desmethylequisetin also called trichosetin. The cluster does not contain the equisetin N-methyltransferase and consequently, trichosetin is isolated as final product. This is Trans-enoyl reductase from Gibberella fujikuroi (strain CBS 195.34 / IMI 58289 / NRRL A-6831) (Bakanae and foot rot disease fungus).